A 330-amino-acid chain; its full sequence is MKRRQKRKHLENEESQETAEKGGGMSKSQEDALQPGSTRVAKGWSQGVGEVTSTSEYCSCVSSSRKLIHSGIQRIHRDSPQPQSPLAQVQERGETPPRSQHVSLSSYSSYKTCVSSLCVNKEERGMKIYYMQVQMNKGVAVSWETEETLESLEKQPRMEEVTLSEVVRVGTPPSDVSTRNLLSDSEPSGEEKEHEERTESDSLPGSPTVEDTPRAKTPDWLVTMENGFRCMACCRVFTTMEALQEHVQFGIREGFSCHVFHLTMAQLTGNMESESTQDEQEEENGNEKEEEEKPEAKEEEGQPTEEDLGLRRSWSQCPGCVFHSPKDRNS.

Disordered stretches follow at residues 1-54 (MKRR…VTST), 76-104 (HRDSPQPQSPLAQVQERGETPPRSQHVSL), and 169-218 (VGTP…AKTP). Polar residues predominate over residues 174-185 (SDVSTRNLLSDS). Positions 189-200 (GEEKEHEERTES) are enriched in basic and acidic residues. Thr217 is subject to Phosphothreonine. Residues 228–252 (FRCMACCRVFTTMEALQEHVQFGIR) form a C2H2-type; degenerate zinc finger. Residues 270–330 (NMESESTQDE…VFHSPKDRNS (61 aa)) are disordered. Residues 275–293 (STQDEQEEENGNEKEEEEK) are compositionally biased toward acidic residues. Ser315 carries the post-translational modification Phosphoserine.

This sequence belongs to the FAM170 family. In terms of tissue distribution, expressed strongly in testis and brain and weakly in prostate, spleen, pancreas and uterus.

The protein resides in the nucleus. Its function is as follows. Acts as a nuclear transcription factor that positively regulates the expression of heat shock genes. Binds to heat shock promoter elements (HSE). The protein is Protein FAM170A (FAM170A) of Homo sapiens (Human).